The chain runs to 365 residues: Pectate trisaccharide-lyase (365 aa).

The signal sequence occupies residues 1 to 25 (MRFSRVVSLVLLLVFTAVLTGAVKA). Ca(2+)-binding residues include Asp-142, Asp-164, and Asp-168. The PbH1 1 repeat unit spans residues 149–171 (SHHIWIDHCTFVNGNDGAVDIKK). Residue Arg-222 is part of the active site. One copy of the PbH1 2 repeat lies at 261–287 (GAKVHVEGNYFMGYGAVMAEAGIAFLP).

The protein belongs to the polysaccharide lyase 1 family. As to quaternary structure, homotetramer. Ca(2+) is required as a cofactor.

The protein localises to the secreted. It carries out the reaction eliminative cleavage of unsaturated trigalacturonate as the major product from the reducing end of polygalacturonic acid/pectate.. Cleaves unsaturated trigalacturonate from pectin. Activity is highest towards polygalacturonic acid, activity on methylated pectins decreases with an increasing degree of methylation. This is Pectate trisaccharide-lyase from Thermotoga sp. (strain RQ2).